Reading from the N-terminus, the 190-residue chain is Xanthine phosphoribosyltransferase (190 aa).

Positions 20 and 27 each coordinate xanthine. 128-132 (ANGKA) serves as a coordination point for 5-phospho-alpha-D-ribose 1-diphosphate. Lysine 156 lines the xanthine pocket.

This sequence belongs to the purine/pyrimidine phosphoribosyltransferase family. Xpt subfamily. Homodimer.

Its subcellular location is the cytoplasm. It carries out the reaction XMP + diphosphate = xanthine + 5-phospho-alpha-D-ribose 1-diphosphate. Its pathway is purine metabolism; XMP biosynthesis via salvage pathway; XMP from xanthine: step 1/1. In terms of biological role, converts the preformed base xanthine, a product of nucleic acid breakdown, to xanthosine 5'-monophosphate (XMP), so it can be reused for RNA or DNA synthesis. The polypeptide is Xanthine phosphoribosyltransferase (Stutzerimonas stutzeri (strain A1501) (Pseudomonas stutzeri)).